Consider the following 416-residue polypeptide: Lipid III flippase (416 aa).

Residues 1–17 (MSLAKASLWTAASTLVK) are Cytoplasmic-facing. Residues 18–38 (IGAGLLVGKLLAVSFGPAGLG) traverse the membrane as a helical segment. Residues 39-45 (LAANFRQ) are Periplasmic-facing. The chain crosses the membrane as a helical span at residues 46-66 (LITVLGVLAGAGIFNGVTKYV). Residues 67–84 (AQYHDNPQQLRRVVGTSS) are Cytoplasmic-facing. Residues 85–105 (AMVLGFSTLMALVFVLAAAPI) traverse the membrane as a helical segment. At 106–121 (SQGLFGNTDYQGLVRL) the chain is on the periplasmic side. A helical membrane pass occupies residues 122–142 (VALVQMGIAWGNLLLALMKGF). Topologically, residues 143-144 (RD) are cytoplasmic. Residues 145–165 (AAGNALSLIVGSLIGVLAYYV) traverse the membrane as a helical segment. Residues 166–174 (SYRLGGYEG) are Periplasmic-facing. The chain crosses the membrane as a helical span at residues 175–195 (ALLGLALIPALVVIPAAIMLI). Over 196–216 (KRGVIPLSYLKPSWDNGLAGQ) the chain is Cytoplasmic. A helical membrane pass occupies residues 217–237 (LSKFTLMALITSVTLPVAYIM). Residues 238–259 (MRKLLAAQYSWDEVGIWQGVSS) lie on the Periplasmic side of the membrane. A helical transmembrane segment spans residues 260–280 (ISDAYLQFITASFSVYLLPTL). Residues 281–302 (SRLTEKRDITREVVKSLKFVLP) lie on the Cytoplasmic side of the membrane. Residues 303 to 323 (AVAAASFTVWLLRDFAIWLLL) form a helical membrane-spanning segment. Topologically, residues 324-334 (SNKFTAMRDLF) are periplasmic. Residues 335-355 (AWQLVGDVLKVGAYVFGYLVI) traverse the membrane as a helical segment. Over 356–370 (AKASLRFYILAEVSQ) the chain is Cytoplasmic. 2 consecutive transmembrane segments (helical) span residues 371 to 391 (FTLL…LGAA) and 392 to 412 (QAYM…FLLW). Topologically, residues 413–416 (RRRA) are cytoplasmic.

Belongs to the polysaccharide transport (PST) (TC 2.A.66.2) family. Probably part of a complex composed of WzxE, WzyE and WzzE.

The protein localises to the cell inner membrane. It functions in the pathway bacterial outer membrane biogenesis; enterobacterial common antigen biosynthesis. Functionally, mediates the transbilayer movement of Und-PP-GlcNAc-ManNAcA-Fuc4NAc (lipid III) from the inner to the outer leaflet of the cytoplasmic membrane during the assembly of enterobacterial common antigen (ECA). Required for the assembly of the phosphoglyceride-linked form of ECA (ECA(PG)) and the water-soluble cyclic form of ECA (ECA(CYC)). Could also mediate the translocation of Und-PP-GlcNAc. This Escherichia coli (strain K12) protein is Lipid III flippase.